A 628-amino-acid polypeptide reads, in one-letter code: F-box only protein 21 (628 aa).

Residues 28 to 84 enclose the F-box domain; that stretch reads SCLVNLPGEVLEYILCCGSLTAADIGRVSSTCRRLRELCQSSGKVWKEQFRVRWPSL.

As to quaternary structure, directly interacts with SKP1 and CUL1.

Functionally, substrate-recognition component of the SCF (SKP1-CUL1-F-box protein)-type E3 ubiquitin ligase complex. This Homo sapiens (Human) protein is F-box only protein 21 (FBXO21).